A 434-amino-acid chain; its full sequence is Na(+)/H(+) antiporter NhaA 1 (434 aa).

11 consecutive transmembrane segments (helical) span residues 34-54 (GLLL…PWSA), 73-93 (LTLG…VAGL), 111-131 (ALPV…YVLW), 141-161 (GWAI…AVIS), 171-191 (FLLT…ALFY), 194-214 (ELHL…ALLV), 233-253 (VLVH…GFAV), 278-298 (SAGL…VGGF), 313-333 (VVTG…WLLA), 346-366 (WVDV…SLLI), and 380-400 (HVKV…TGVL).

The protein belongs to the NhaA Na(+)/H(+) (TC 2.A.33) antiporter family.

The protein resides in the cell membrane. It catalyses the reaction Na(+)(in) + 2 H(+)(out) = Na(+)(out) + 2 H(+)(in). Its function is as follows. Na(+)/H(+) antiporter that extrudes sodium in exchange for external protons. This chain is Na(+)/H(+) antiporter NhaA 1, found in Nocardioides sp. (strain ATCC BAA-499 / JS614).